We begin with the raw amino-acid sequence, 319 residues long: Small ribosomal subunit protein RACK1 (319 aa).

Ala2 carries the N-acetylalanine modification. WD repeat units lie at residues 15 to 55, 63 to 102, 105 to 145, 147 to 191, 194 to 233, 235 to 275, and 284 to 319; these read GHNG…QKFG, GHSH…TYQR, GHKS…ATLL, HNDW…IEAD, GHNS…AMYT, SAQD…DDLR, and AAEP…MTAN. Glycyl lysine isopeptide (Lys-Gly) (interchain with G-Cter in ubiquitin) cross-links involve residues Lys46 and Lys53. Residue Thr96 is modified to Phosphothreonine. Glycyl lysine isopeptide (Lys-Gly) (interchain with G-Cter in ubiquitin) cross-links involve residues Lys107, Lys137, and Lys161. Thr168 bears the Phosphothreonine mark.

This sequence belongs to the WD repeat G protein beta family. Ribosomal protein RACK1 subfamily. As to quaternary structure, component of the small ribosomal subunit (SSU). Mature yeast ribosomes consist of a small (40S) and a large (60S) subunit. The 40S small subunit contains 1 molecule of ribosomal RNA (18S rRNA) and 33 different proteins (encoded by 57 genes). The large 60S subunit contains 3 rRNA molecules (25S, 5.8S and 5S rRNA) and 46 different proteins (encoded by 81 genes). RACK1 is located at the head of the SSU in the vicinity of the mRNA exit channel. RACK1 interacts with the mRNA-binding protein SCP16. RACK1 also exists simultaneously as a homodimer in a cytosolic non-ribosome-bound form.

Its subcellular location is the cytoplasm. Its function is as follows. Component of the ribosome, a large ribonucleoprotein complex responsible for the synthesis of proteins in the cell. The small ribosomal subunit (SSU) binds messenger RNAs (mRNAs) and translates the encoded message by selecting cognate aminoacyl-transfer RNA (tRNA) molecules. The large subunit (LSU) contains the ribosomal catalytic site termed the peptidyl transferase center (PTC), which catalyzes the formation of peptide bonds, thereby polymerizing the amino acids delivered by tRNAs into a polypeptide chain. The nascent polypeptides leave the ribosome through a tunnel in the LSU and interact with protein factors that function in enzymatic processing, targeting, and the membrane insertion of nascent chains at the exit of the ribosomal tunnel. Located at the head of the 40S ribosomal subunit in the vicinity of the mRNA exit channel, RACK1 serves as a scaffold protein that can recruit other proteins to the ribosome. Involved in induction of the ribosome quality control (RQC) pathway; a pathway that degrades nascent peptide chains during problematic translation. Involved in the negative regulation of translation of a specific subset of proteins. In Saccharomyces cerevisiae (strain ATCC 204508 / S288c) (Baker's yeast), this protein is Small ribosomal subunit protein RACK1.